Here is a 55-residue protein sequence, read N- to C-terminus: Major pollen allergen Dac g 4 (55 aa).

This Dactylis glomerata (Orchard grass) protein is Major pollen allergen Dac g 4.